The sequence spans 634 residues: 1-deoxy-D-xylulose-5-phosphate synthase (634 aa).

Thiamine diphosphate is bound by residues histidine 74 and 115 to 117; that span reads AHS. Aspartate 146 is a Mg(2+) binding site. Residues 147 to 148, asparagine 176, tyrosine 283, and glutamate 365 each bind thiamine diphosphate; that span reads GA. Residue asparagine 176 participates in Mg(2+) binding.

This sequence belongs to the transketolase family. DXPS subfamily. Homodimer. Mg(2+) serves as cofactor. It depends on thiamine diphosphate as a cofactor.

The catalysed reaction is D-glyceraldehyde 3-phosphate + pyruvate + H(+) = 1-deoxy-D-xylulose 5-phosphate + CO2. Its pathway is metabolic intermediate biosynthesis; 1-deoxy-D-xylulose 5-phosphate biosynthesis; 1-deoxy-D-xylulose 5-phosphate from D-glyceraldehyde 3-phosphate and pyruvate: step 1/1. Functionally, catalyzes the acyloin condensation reaction between C atoms 2 and 3 of pyruvate and glyceraldehyde 3-phosphate to yield 1-deoxy-D-xylulose-5-phosphate (DXP). This is 1-deoxy-D-xylulose-5-phosphate synthase from Burkholderia thailandensis (strain ATCC 700388 / DSM 13276 / CCUG 48851 / CIP 106301 / E264).